Reading from the N-terminus, the 141-residue chain is Large ribosomal subunit protein uL11 (141 aa).

It belongs to the universal ribosomal protein uL11 family. Part of the ribosomal stalk of the 50S ribosomal subunit. Interacts with L10 and the large rRNA to form the base of the stalk. L10 forms an elongated spine to which L12 dimers bind in a sequential fashion forming a multimeric L10(L12)X complex. One or more lysine residues are methylated.

Its function is as follows. Forms part of the ribosomal stalk which helps the ribosome interact with GTP-bound translation factors. The protein is Large ribosomal subunit protein uL11 of Lactiplantibacillus plantarum (strain ATCC BAA-793 / NCIMB 8826 / WCFS1) (Lactobacillus plantarum).